The chain runs to 580 residues: 2-succinyl-5-enolpyruvyl-6-hydroxy-3-cyclohexene-1-carboxylate synthase (580 aa).

This sequence belongs to the TPP enzyme family. MenD subfamily. In terms of assembly, homodimer. It depends on Mg(2+) as a cofactor. Mn(2+) serves as cofactor. Thiamine diphosphate is required as a cofactor.

It catalyses the reaction isochorismate + 2-oxoglutarate + H(+) = 5-enolpyruvoyl-6-hydroxy-2-succinyl-cyclohex-3-ene-1-carboxylate + CO2. It functions in the pathway quinol/quinone metabolism; 1,4-dihydroxy-2-naphthoate biosynthesis; 1,4-dihydroxy-2-naphthoate from chorismate: step 2/7. It participates in quinol/quinone metabolism; menaquinone biosynthesis. Catalyzes the thiamine diphosphate-dependent decarboxylation of 2-oxoglutarate and the subsequent addition of the resulting succinic semialdehyde-thiamine pyrophosphate anion to isochorismate to yield 2-succinyl-5-enolpyruvyl-6-hydroxy-3-cyclohexene-1-carboxylate (SEPHCHC). This chain is 2-succinyl-5-enolpyruvyl-6-hydroxy-3-cyclohexene-1-carboxylate synthase, found in Listeria innocua serovar 6a (strain ATCC BAA-680 / CLIP 11262).